Here is a 356-residue protein sequence, read N- to C-terminus: tRNA N6-adenosine threonylcarbamoyltransferase (356 aa).

Fe cation contacts are provided by histidine 116 and histidine 120. Substrate-binding positions include 139-143, aspartate 174, glycine 187, aspartate 191, and asparagine 281; that span reads IVSGG. Aspartate 309 is a Fe cation binding site.

It belongs to the KAE1 / TsaD family. Requires Fe(2+) as cofactor.

The protein resides in the cytoplasm. It catalyses the reaction L-threonylcarbamoyladenylate + adenosine(37) in tRNA = N(6)-L-threonylcarbamoyladenosine(37) in tRNA + AMP + H(+). Required for the formation of a threonylcarbamoyl group on adenosine at position 37 (t(6)A37) in tRNAs that read codons beginning with adenine. Is involved in the transfer of the threonylcarbamoyl moiety of threonylcarbamoyl-AMP (TC-AMP) to the N6 group of A37, together with TsaE and TsaB. TsaD likely plays a direct catalytic role in this reaction. The sequence is that of tRNA N6-adenosine threonylcarbamoyltransferase from Frankia casuarinae (strain DSM 45818 / CECT 9043 / HFP020203 / CcI3).